The chain runs to 264 residues: 3-methyl-2-oxobutanoate hydroxymethyltransferase (264 aa).

Residues aspartate 45 and aspartate 84 each contribute to the Mg(2+) site. Residues 45–46 (DS), aspartate 84, and lysine 113 contribute to the 3-methyl-2-oxobutanoate site. A Mg(2+)-binding site is contributed by glutamate 115. Glutamate 182 serves as the catalytic Proton acceptor.

Belongs to the PanB family. Homodecamer; pentamer of dimers. Requires Mg(2+) as cofactor.

The protein resides in the cytoplasm. The enzyme catalyses 3-methyl-2-oxobutanoate + (6R)-5,10-methylene-5,6,7,8-tetrahydrofolate + H2O = 2-dehydropantoate + (6S)-5,6,7,8-tetrahydrofolate. The protein operates within cofactor biosynthesis; (R)-pantothenate biosynthesis; (R)-pantoate from 3-methyl-2-oxobutanoate: step 1/2. Functionally, catalyzes the reversible reaction in which hydroxymethyl group from 5,10-methylenetetrahydrofolate is transferred onto alpha-ketoisovalerate to form ketopantoate. This is 3-methyl-2-oxobutanoate hydroxymethyltransferase from Caldicellulosiruptor saccharolyticus (strain ATCC 43494 / DSM 8903 / Tp8T 6331).